The primary structure comprises 224 residues: Adenylate kinase (224 aa).

10–15 (GSGKGT) lines the ATP pocket. Residues 30–59 (ESGAIFRENISKGTELGAKAKEYIDRGDLV) are NMP. AMP-binding positions include serine 31, arginine 36, 57 to 59 (DLV), 85 to 88 (GFPR), and glutamine 92. The segment at 126–165 (GRRLCVNDNNHPNNIFIDAIKPDGDKCRVCGGELKTRSDD) is LID. Arginine 127 contributes to the ATP binding site. Residues arginine 162 and arginine 174 each coordinate AMP. Proline 211 contacts ATP.

This sequence belongs to the adenylate kinase family. In terms of assembly, monomer.

The protein resides in the cytoplasm. The catalysed reaction is AMP + ATP = 2 ADP. The protein operates within purine metabolism; AMP biosynthesis via salvage pathway; AMP from ADP: step 1/1. In terms of biological role, catalyzes the reversible transfer of the terminal phosphate group between ATP and AMP. Plays an important role in cellular energy homeostasis and in adenine nucleotide metabolism. This chain is Adenylate kinase, found in Desulfosudis oleivorans (strain DSM 6200 / JCM 39069 / Hxd3) (Desulfococcus oleovorans).